Here is a 373-residue protein sequence, read N- to C-terminus: GTP cyclohydrolase 1 type 2 homolog (373 aa).

A divalent metal cation contacts are provided by H67, H68, D106, H333, and E336.

It belongs to the GTP cyclohydrolase I type 2/NIF3 family. In terms of assembly, homohexamer.

The polypeptide is GTP cyclohydrolase 1 type 2 homolog (Listeria innocua serovar 6a (strain ATCC BAA-680 / CLIP 11262)).